Reading from the N-terminus, the 604-residue chain is Terpenoid synthase 30 (604 aa).

Residues N356, D360, N500, T504, and E508 each coordinate Mg(2+). The DDXXD motif; degenerate motif lies at 356–360 (NDVCD).

It belongs to the terpene synthase family. Tpsa subfamily. It depends on Mg(2+) as a cofactor. Mn(2+) is required as a cofactor.

Its subcellular location is the cytoplasm. The protein operates within secondary metabolite biosynthesis; terpenoid biosynthesis. In terms of biological role, involved in terpene biosynthesis in roots. Possesses sesquiterpene (C15) synthase activity and diterpene (C20) synthase activity in vitro. This is Terpenoid synthase 30 from Arabidopsis thaliana (Mouse-ear cress).